Consider the following 353-residue polypeptide: Phosphate acyltransferase (353 aa).

Belongs to the PlsX family. As to quaternary structure, homodimer. Probably interacts with PlsY.

It is found in the cytoplasm. It catalyses the reaction a fatty acyl-[ACP] + phosphate = an acyl phosphate + holo-[ACP]. The protein operates within lipid metabolism; phospholipid metabolism. Catalyzes the reversible formation of acyl-phosphate (acyl-PO(4)) from acyl-[acyl-carrier-protein] (acyl-ACP). This enzyme utilizes acyl-ACP as fatty acyl donor, but not acyl-CoA. This Afipia carboxidovorans (strain ATCC 49405 / DSM 1227 / KCTC 32145 / OM5) (Oligotropha carboxidovorans) protein is Phosphate acyltransferase.